Here is a 141-residue protein sequence, read N- to C-terminus: Nucleoside diphosphate kinase (141 aa).

ATP contacts are provided by Lys-11, Phe-59, Arg-87, Thr-93, Arg-104, and Asn-114. His-117 serves as the catalytic Pros-phosphohistidine intermediate.

The protein belongs to the NDK family. As to quaternary structure, homotetramer. Mg(2+) serves as cofactor.

The protein resides in the cytoplasm. It catalyses the reaction a 2'-deoxyribonucleoside 5'-diphosphate + ATP = a 2'-deoxyribonucleoside 5'-triphosphate + ADP. The enzyme catalyses a ribonucleoside 5'-diphosphate + ATP = a ribonucleoside 5'-triphosphate + ADP. Major role in the synthesis of nucleoside triphosphates other than ATP. The ATP gamma phosphate is transferred to the NDP beta phosphate via a ping-pong mechanism, using a phosphorylated active-site intermediate. This is Nucleoside diphosphate kinase from Nitrosomonas europaea (strain ATCC 19718 / CIP 103999 / KCTC 2705 / NBRC 14298).